Reading from the N-terminus, the 108-residue chain is TYRO protein tyrosine kinase-binding protein (108 aa).

The first 25 residues, 1-25 (MEGLRPSDRLLSLLLTVGGLSLVLA), serve as a signal peptide directing secretion. Over 26 to 36 (QSECNCSSVSP) the chain is Extracellular. Residues 37–57 (GVLAGIVLGDLMLTLLIALAV) form a helical membrane-spanning segment. D46 contributes to the Ca(2+) binding site. The Cytoplasmic segment spans residues 58–108 (YYLGRLVPRGRGATEVTRKQHIPETESPYQELQGQRTDVYSDLNTQRPYYK). Residues 71 to 108 (TEVTRKQHIPETESPYQELQGQRTDVYSDLNTQRPYYK) form a disordered region. Residues 75–103 (RKQHIPETESPYQELQGQRTDVYSDLNTQ) form the ITAM domain. A compositionally biased stretch (polar residues) spans 84 to 108 (SPYQELQGQRTDVYSDLNTQRPYYK). A phosphotyrosine mark is found at Y86 and Y97.

This sequence belongs to the TYROBP family. In terms of assembly, homodimer; disulfide-linked. Homotrimer; disulfide-linked. Homotetramer; disulfide-linked. Homotrimers and homotetramers form when low levels of partner receptors are available and is competitive with assembly with interacting receptors. They may represent alternative oligomerization states or may be intermediates in the receptor assembly process. Binding of a metal cation aids in homooligomerization through coordination of the metal ion by the subunits of the oligomer. Interacts with TREM1. Interacts with TREM2. Interacts with CLECSF5. Interacts with CD300LB and CD300C2. Interacts with CD300E. Interacts (via ITAM domain) with SYK (via SH2 domains); activates SYK mediating neutrophils and macrophages integrin-mediated activation. Interacts with KLRC2. Interacts with CD300H. Interacts with KLRD1. Interacts with SIGLEC1. In terms of processing, following ligand binding by associated receptors, tyrosine phosphorylated in the ITAM domain which leads to activation of additional tyrosine kinases and subsequent cell activation.

The protein localises to the cell membrane. Functionally, adapter protein which non-covalently associates with activating receptors found on the surface of a variety of immune cells to mediate signaling and cell activation following ligand binding by the receptors. TYROBP is tyrosine-phosphorylated in the ITAM domain following ligand binding by the associated receptors which leads to activation of additional tyrosine kinases and subsequent cell activation. Also has an inhibitory role in some cells. Non-covalently associates with activating receptors of the CD300 family to mediate cell activation. Also mediates cell activation through association with activating receptors of the CD200R family. Required for neutrophil activation mediated by integrin. Required for the activation of myeloid cells mediated by the CLEC5A/MDL1 receptor. Associates with natural killer (NK) cell receptors such as the KLRD1/KLRC2 heterodimer to mediate NK cell activation. Associates with TREM1 to mediate activation of neutrophils and monocytes. Associates with TREM2 on monocyte-derived dendritic cells to mediate up-regulation of chemokine receptor CCR7 and dendritic cell maturation and survival. Association with TREM2 mediates cytokine-induced formation of multinucleated giant cells which are formed by the fusion of macrophages. Stabilizes the TREM2 C-terminal fragment (TREM2-CTF) produced by TREM2 ectodomain shedding which suppresses the release of pro-inflammatory cytokines. In microglia, required with TREM2 for phagocytosis of apoptotic neurons. Required with ITGAM/CD11B in microglia to control production of microglial superoxide ions which promote the neuronal apoptosis that occurs during brain development. Promotes pro-inflammatory responses in microglia following nerve injury which accelerates degeneration of injured neurons. Positively regulates the expression of the IRAK3/IRAK-M kinase and IL10 production by liver dendritic cells and inhibits their T cell allosimulatory ability. Negatively regulates B cell proliferation. Required for CSF1-mediated osteoclast cytoskeletal organization. Positively regulates multinucleation during osteoclast development. In Bos taurus (Bovine), this protein is TYRO protein tyrosine kinase-binding protein.